The chain runs to 119 residues: Protein TusC (119 aa).

Belongs to the DsrF/TusC family. In terms of assembly, heterohexamer, formed by a dimer of trimers. The hexameric TusBCD complex contains 2 copies each of TusB, TusC and TusD. The TusBCD complex interacts with TusE.

The protein localises to the cytoplasm. Functionally, part of a sulfur-relay system required for 2-thiolation of 5-methylaminomethyl-2-thiouridine (mnm(5)s(2)U) at tRNA wobble positions. The chain is Protein TusC from Pectobacterium carotovorum subsp. carotovorum (strain PC1).